A 256-amino-acid chain; its full sequence is Thiazole synthase (256 aa).

Residue Lys98 is the Schiff-base intermediate with DXP of the active site. Residues Gly159, 185-186, and 207-208 contribute to the 1-deoxy-D-xylulose 5-phosphate site; these read AG and NT.

It belongs to the ThiG family. As to quaternary structure, homotetramer. Forms heterodimers with either ThiH or ThiS.

It localises to the cytoplasm. The catalysed reaction is [ThiS sulfur-carrier protein]-C-terminal-Gly-aminoethanethioate + 2-iminoacetate + 1-deoxy-D-xylulose 5-phosphate = [ThiS sulfur-carrier protein]-C-terminal Gly-Gly + 2-[(2R,5Z)-2-carboxy-4-methylthiazol-5(2H)-ylidene]ethyl phosphate + 2 H2O + H(+). The protein operates within cofactor biosynthesis; thiamine diphosphate biosynthesis. In terms of biological role, catalyzes the rearrangement of 1-deoxy-D-xylulose 5-phosphate (DXP) to produce the thiazole phosphate moiety of thiamine. Sulfur is provided by the thiocarboxylate moiety of the carrier protein ThiS. In vitro, sulfur can be provided by H(2)S. This Aliivibrio fischeri (strain MJ11) (Vibrio fischeri) protein is Thiazole synthase.